A 319-amino-acid polypeptide reads, in one-letter code: Probable alcohol dehydrogenase (319 aa).

Residues Cys18, His39, Cys68, Cys71, Cys74, Cys82, and Cys149 each contribute to the Zn(2+) site.

This sequence belongs to the zinc-containing alcohol dehydrogenase family. Zn(2+) serves as cofactor.

It carries out the reaction a primary alcohol + NAD(+) = an aldehyde + NADH + H(+). It catalyses the reaction a secondary alcohol + NAD(+) = a ketone + NADH + H(+). This is Probable alcohol dehydrogenase (terPD) from Pseudomonas sp.